A 408-amino-acid chain; its full sequence is Peptidase T (408 aa).

Histidine 78 provides a ligand contact to Zn(2+). Aspartate 80 is a catalytic residue. Aspartate 141 contributes to the Zn(2+) binding site. Glutamate 175 acts as the Proton acceptor in catalysis. Zn(2+) contacts are provided by glutamate 176, aspartate 198, and histidine 380.

It belongs to the peptidase M20B family. Zn(2+) is required as a cofactor.

The protein localises to the cytoplasm. The enzyme catalyses Release of the N-terminal residue from a tripeptide.. Cleaves the N-terminal amino acid of tripeptides. This is Peptidase T from Clostridium botulinum (strain Okra / Type B1).